A 212-amino-acid chain; its full sequence is Ribosomal RNA small subunit methyltransferase G (212 aa).

S-adenosyl-L-methionine contacts are provided by residues phenylalanine 78, 96–98 (ESS), 124–125 (VE), and arginine 141.

This sequence belongs to the methyltransferase superfamily. RNA methyltransferase RsmG family.

It is found in the cytoplasm. Specifically methylates the N7 position of a guanine in 16S rRNA. The polypeptide is Ribosomal RNA small subunit methyltransferase G (Onion yellows phytoplasma (strain OY-M)).